Reading from the N-terminus, the 37-residue chain is Large ribosomal subunit protein bL36 (37 aa).

Belongs to the bacterial ribosomal protein bL36 family.

In Desulforapulum autotrophicum (strain ATCC 43914 / DSM 3382 / VKM B-1955 / HRM2) (Desulfobacterium autotrophicum), this protein is Large ribosomal subunit protein bL36.